The primary structure comprises 107 residues: Phosphoribosyl-ATP pyrophosphatase (107 aa).

Belongs to the PRA-PH family.

It is found in the cytoplasm. The enzyme catalyses 1-(5-phospho-beta-D-ribosyl)-ATP + H2O = 1-(5-phospho-beta-D-ribosyl)-5'-AMP + diphosphate + H(+). It participates in amino-acid biosynthesis; L-histidine biosynthesis; L-histidine from 5-phospho-alpha-D-ribose 1-diphosphate: step 2/9. The polypeptide is Phosphoribosyl-ATP pyrophosphatase (Bacillus cereus (strain ATCC 14579 / DSM 31 / CCUG 7414 / JCM 2152 / NBRC 15305 / NCIMB 9373 / NCTC 2599 / NRRL B-3711)).